Reading from the N-terminus, the 365-residue chain is Protein-glutamate methylesterase/protein-glutamine glutaminase 1 (365 aa).

A Response regulatory domain is found at 4–121; sequence KVLVVDDSQF…SRDSVVLKKR (118 aa). Position 55 is a 4-aspartylphosphate (D55). Residues 138–173 are disordered; it reads AARSTTQPSGVRPSALGANLSSSRSPRPASSAPSAP. The segment covering 158–172 has biased composition (low complexity); the sequence is SSSRSPRPASSAPSA. A CheB-type methylesterase domain is found at 182–365; it reads KLVAIGASTG…QVWQRLVSDV (184 aa). Catalysis depends on residues S189, H216, and D310.

It belongs to the CheB family. In terms of processing, phosphorylated by CheA. Phosphorylation of the N-terminal regulatory domain activates the methylesterase activity.

The protein localises to the cytoplasm. It catalyses the reaction [protein]-L-glutamate 5-O-methyl ester + H2O = L-glutamyl-[protein] + methanol + H(+). The enzyme catalyses L-glutaminyl-[protein] + H2O = L-glutamyl-[protein] + NH4(+). Its function is as follows. Involved in chemotaxis. Part of a chemotaxis signal transduction system that modulates chemotaxis in response to various stimuli. Catalyzes the demethylation of specific methylglutamate residues introduced into the chemoreceptors (methyl-accepting chemotaxis proteins or MCP) by CheR. Also mediates the irreversible deamidation of specific glutamine residues to glutamic acid. The chain is Protein-glutamate methylesterase/protein-glutamine glutaminase 1 from Saccharophagus degradans (strain 2-40 / ATCC 43961 / DSM 17024).